A 37-amino-acid chain; its full sequence is Large ribosomal subunit protein bL36A (37 aa).

This sequence belongs to the bacterial ribosomal protein bL36 family.

This chain is Large ribosomal subunit protein bL36A, found in Arthrobacter sp. (strain FB24).